The following is a 248-amino-acid chain: tRNA (guanine-N(1)-)-methyltransferase (248 aa).

Residues Gly-117 and 137-142 (IGDFVL) each bind S-adenosyl-L-methionine.

It belongs to the RNA methyltransferase TrmD family. As to quaternary structure, homodimer.

The protein localises to the cytoplasm. It catalyses the reaction guanosine(37) in tRNA + S-adenosyl-L-methionine = N(1)-methylguanosine(37) in tRNA + S-adenosyl-L-homocysteine + H(+). In terms of biological role, specifically methylates guanosine-37 in various tRNAs. In Polynucleobacter asymbioticus (strain DSM 18221 / CIP 109841 / QLW-P1DMWA-1) (Polynucleobacter necessarius subsp. asymbioticus), this protein is tRNA (guanine-N(1)-)-methyltransferase.